The primary structure comprises 186 residues: uncharacterized protein (186 aa).

This is an uncharacterized protein from Caenorhabditis elegans.